The primary structure comprises 576 residues: Arginine--tRNA ligase (576 aa).

Positions 122-132 (PNVAKEMHVGH) match the 'HIGH' region motif.

The protein belongs to the class-I aminoacyl-tRNA synthetase family. In terms of assembly, monomer.

The protein localises to the cytoplasm. The enzyme catalyses tRNA(Arg) + L-arginine + ATP = L-arginyl-tRNA(Arg) + AMP + diphosphate. The sequence is that of Arginine--tRNA ligase from Photobacterium profundum (strain SS9).